The following is a 147-amino-acid chain: Hemoglobin subunit beta (147 aa).

The region spanning 3-147 (HWTAEEKQII…VAHALARKYH (145 aa)) is the Globin domain. 2 residues coordinate heme b: His64 and His93.

Heterotetramer of two alpha (or alpha-D) and two beta chains. As to expression, red blood cells.

Its function is as follows. Involved in oxygen transport from the lung to the various peripheral tissues. The beta chain is a component of adult hemoglobin A and D. This chain is Hemoglobin subunit beta, found in Aythya fuligula (Tufted duck).